A 215-amino-acid chain; its full sequence is uncharacterized protein (215 aa).

6 helical membrane passes run 21 to 40 (IIKYIVIFFLFYIISTVLIN), 50 to 69 (LIFSVICLLISLISFSTIIF), 95 to 117 (FVAIFICTTVGLIFVLPVIYVFF), 122 to 144 (LEIALFFISVWMIFVLSSSLVVL), 157 to 179 (NFVGTFIMPLLIPNIIMTGLILQ), and 185 to 207 (LIFIMIGINLIFLPVSFCLSAYL).

The protein belongs to the CcmB/CycW/HelB family.

It is found in the cell membrane. This is an uncharacterized protein from Rickettsia prowazekii (strain Madrid E).